Consider the following 230-residue polypeptide: MATPAQLGLMDAASPVMEEMIYFHDHVMLVLILITCLIFYSMLVLISSKYIYRFLTDGHVIETVWTVIPAIILVVVALPSLKLLYLTDELDNPQLTIKSVGHQWYWSYEYTDYYDIEFDSYMLPLGDLSKGDARLLEVDNRVVLPVDTSVRVLVTAADVIHSWTVPSLGLKMDAVPGRLNQLALQCSRVGTFYGQCSEICGANHSFMPIVIEAVPVEVFEGWCDMMLDEE.

Residues M1–H26 lie on the Mitochondrial intermembrane side of the membrane. A helical transmembrane segment spans residues V27 to S48. Over K49–E62 the chain is Mitochondrial matrix. The helical transmembrane segment at T63–K82 threads the bilayer. At L83–E230 the chain is on the mitochondrial intermembrane side. 6 residues coordinate Cu cation: H161, C196, E198, C200, H204, and M207. E198 serves as a coordination point for Mg(2+).

Belongs to the cytochrome c oxidase subunit 2 family. In terms of assembly, component of the cytochrome c oxidase (complex IV, CIV), a multisubunit enzyme composed of a catalytic core of 3 subunits and several supernumerary subunits. The complex exists as a monomer or a dimer and forms supercomplexes (SCs) in the inner mitochondrial membrane with ubiquinol-cytochrome c oxidoreductase (cytochrome b-c1 complex, complex III, CIII). The cofactor is Cu cation.

Its subcellular location is the mitochondrion inner membrane. It catalyses the reaction 4 Fe(II)-[cytochrome c] + O2 + 8 H(+)(in) = 4 Fe(III)-[cytochrome c] + 2 H2O + 4 H(+)(out). In terms of biological role, component of the cytochrome c oxidase, the last enzyme in the mitochondrial electron transport chain which drives oxidative phosphorylation. The respiratory chain contains 3 multisubunit complexes succinate dehydrogenase (complex II, CII), ubiquinol-cytochrome c oxidoreductase (cytochrome b-c1 complex, complex III, CIII) and cytochrome c oxidase (complex IV, CIV), that cooperate to transfer electrons derived from NADH and succinate to molecular oxygen, creating an electrochemical gradient over the inner membrane that drives transmembrane transport and the ATP synthase. Cytochrome c oxidase is the component of the respiratory chain that catalyzes the reduction of oxygen to water. Electrons originating from reduced cytochrome c in the intermembrane space (IMS) are transferred via the dinuclear copper A center (CU(A)) of subunit 2 and heme A of subunit 1 to the active site in subunit 1, a binuclear center (BNC) formed by heme A3 and copper B (CU(B)). The BNC reduces molecular oxygen to 2 water molecules using 4 electrons from cytochrome c in the IMS and 4 protons from the mitochondrial matrix. This Branchiostoma floridae (Florida lancelet) protein is Cytochrome c oxidase subunit 2 (COII).